The sequence spans 39 residues: SPbeta prophage-derived membrane protein YosA (39 aa).

The helical transmembrane segment at 19-39 threads the bilayer; that stretch reads SFVLIVVLFILLIIVGATFLY.

Belongs to the SscA family.

Its subcellular location is the membrane. The chain is SPbeta prophage-derived membrane protein YosA (yosA) from Bacillus subtilis (strain 168).